The following is a 137-amino-acid chain: ATP synthase epsilon chain, chloroplastic (137 aa).

Belongs to the ATPase epsilon chain family. In terms of assembly, F-type ATPases have 2 components, CF(1) - the catalytic core - and CF(0) - the membrane proton channel. CF(1) has five subunits: alpha(3), beta(3), gamma(1), delta(1), epsilon(1). CF(0) has three main subunits: a, b and c.

The protein resides in the plastid. The protein localises to the chloroplast thylakoid membrane. Its function is as follows. Produces ATP from ADP in the presence of a proton gradient across the membrane. The polypeptide is ATP synthase epsilon chain, chloroplastic (Pinus thunbergii (Japanese black pine)).